A 328-amino-acid polypeptide reads, in one-letter code: Probable cell division protein WhiA (328 aa).

The segment at residues 273-306 (SLEELGALADPPLTKDAVAGRIRRLLAMADKRAS) is a DNA-binding region (H-T-H motif).

It belongs to the WhiA family. As to quaternary structure, monomer in solution.

Functionally, involved in cell division and chromosome segregation. Involved in sporulation. May coordinate the cessation of aerial hyphae growth and subsequent chromosome segregation and/or septation. Required for expression of the ParB partioning protein during sporogenesis. Activates its own transcription and represses WhiB. Binds with low affinity to its own promoter and to the Parp2 sporulation-specific promoter. Also binds directly to the RNA polymerase sigma factor WhiG, leading to inhibition of WhiG-dependent transcription in a dose-dependent manner. The protein is Probable cell division protein WhiA of Streptomyces coelicolor (strain ATCC BAA-471 / A3(2) / M145).